Here is a 479-residue protein sequence, read N- to C-terminus: POU domain, class 2, transcription factor 2 (479 aa).

5 disordered regions span residues 1–86 (MVHS…AQPH), 166–200 (TQAV…PSDL), 275–298 (SSLP…GRRR), 357–393 (PCSA…SQAS), and 409–479 (TLHP…PYQP). The span at 12–37 (RMSKPLEAEKQGLDSPSEHTDTERNG) shows a compositional bias: basic and acidic residues. A compositionally biased stretch (polar residues) spans 38 to 60 (PDTNHQNPQNKTSPFSVSPTGPS). The span at 76 to 85 (APLPPQPAQP) shows a compositional bias: pro residues. The POU-specific domain occupies 195–269 (EEPSDLEELE…LLEKWLNDAE (75 aa)). The span at 275-288 (SSLPSPNQLSSPSL) shows a compositional bias: low complexity. Residues 297–356 (RRKKRTSIETNVRFALEKSFLANQKPTSEEILLIAEQLHMEKEVIRVWFCNRRQKEKRIN) constitute a DNA-binding region (homeobox). A leucine-zipper region spans residues 389 to 410 (LSQASSSLSTTVTTLSSAVGTL). Gly residues predominate over residues 416 to 425 (AGGGGGGGGA).

Belongs to the POU transcription factor family. Class-2 subfamily. In terms of assembly, interacts with NR3C1, AR and PGR. Interacts with POU2AF1; the interaction increases POU2F2 transactivation activity. As to expression, isoform 3 is B-cell specific. Isoform 5 is expressed in B-cells and the immunoglobulin-expressing T-cell line MOLT-4, but not in the T-cell line BW5147.

The protein resides in the cytoplasm. The protein localises to the nucleus. Its activity is regulated as follows. Transactivation activity is enhanced by transcriptional coactivator POU2AF1. Functionally, transcription factor that specifically binds to the octamer motif (5'-ATTTGCAT-3'). Regulates IL6 expression in B cells with POU2AF1. Regulates transcription in a number of tissues in addition to activating immunoglobulin gene expression. Modulates transcription transactivation by NR3C1, AR and PGR. In terms of biological role, activates the U2 small nuclear RNA (snRNA) promoter. The sequence is that of POU domain, class 2, transcription factor 2 from Homo sapiens (Human).